Consider the following 395-residue polypeptide: Aspergillopepsin-1 (395 aa).

The signal sequence occupies residues 1–20 (MVVFSKVTAVVVGLSTIVSA). A propeptide spans 21-70 (VPVVQPRKGFTINQVARPVTNKKTVNLPAVYANALTKYGGTVPDSVKAAA) (activation peptide). Residues 86–392 (YLTPVKVGGT…DSQGPRLGFA (307 aa)) form the Peptidase A1 domain. Catalysis depends on residues aspartate 102 and aspartate 284. Cysteines 320 and 355 form a disulfide.

It belongs to the peptidase A1 family. In terms of assembly, monomer.

Its subcellular location is the secreted. It catalyses the reaction Hydrolysis of proteins with broad specificity. Generally favors hydrophobic residues in P1 and P1', but also accepts Lys in P1, which leads to activation of trypsinogen. Does not clot milk.. Secreted aspartic endopeptidase that allows assimilation of proteinaceous substrates. The scissile peptide bond is attacked by a nucleophilic water molecule activated by two aspartic residues in the active site. Shows a broad primary substrate specificity. Favors hydrophobic residues at the P1 and P1' positions, but also accepts a lysine residue in the P1 position, leading to the activation of trypsinogen and chymotrypsinogen A. The sequence is that of Aspergillopepsin-1 (pepA) from Aspergillus fumigatus (strain CBS 144.89 / FGSC A1163 / CEA10) (Neosartorya fumigata).